Here is a 175-residue protein sequence, read N- to C-terminus: MSQALTLARPYGRAAFAIAREGGNFAPWSDALAFSAQVAGDPRVAALLLNPALGQEQAVTLLAPPQAGEDYLRFLGVLADAQRLSLLPEVAGLYEHLRAEAEHVVKATVTSAAAMSQTELDTIAAALKKRFGRDVDITTAVDASLIGGAVIDTGDVVIDGSLKGKLARLQSSLAH.

It belongs to the ATPase delta chain family. In terms of assembly, F-type ATPases have 2 components, F(1) - the catalytic core - and F(0) - the membrane proton channel. F(1) has five subunits: alpha(3), beta(3), gamma(1), delta(1), epsilon(1). F(0) has three main subunits: a(1), b(2) and c(10-14). The alpha and beta chains form an alternating ring which encloses part of the gamma chain. F(1) is attached to F(0) by a central stalk formed by the gamma and epsilon chains, while a peripheral stalk is formed by the delta and b chains.

The protein localises to the cell inner membrane. F(1)F(0) ATP synthase produces ATP from ADP in the presence of a proton or sodium gradient. F-type ATPases consist of two structural domains, F(1) containing the extramembraneous catalytic core and F(0) containing the membrane proton channel, linked together by a central stalk and a peripheral stalk. During catalysis, ATP synthesis in the catalytic domain of F(1) is coupled via a rotary mechanism of the central stalk subunits to proton translocation. Functionally, this protein is part of the stalk that links CF(0) to CF(1). It either transmits conformational changes from CF(0) to CF(1) or is implicated in proton conduction. This chain is ATP synthase subunit delta, found in Xanthomonas axonopodis pv. citri (strain 306).